Consider the following 297-residue polypeptide: Probable ABC transporter phosphite binding protein PhnD1 (297 aa).

An N-terminal signal peptide occupies residues Met-1–Ser-24.

The protein belongs to the phosphate/phosphite/phosphonate binding protein family. The complex may be composed of two ATP-binding proteins (PhnC1), two transmembrane proteins (PhnE1) and a solute-binding protein (PhnD1).

It localises to the periplasm. Its function is as follows. Probably part of the ABC transporter complex PhnD1C1E1. Binds strongly to inorganic phosphite and with very weak affinities to methylphosphonate (MPn) and phosphate. This Prochlorococcus marinus (strain MIT 9301) protein is Probable ABC transporter phosphite binding protein PhnD1.